The sequence spans 74 residues: Translational regulator CsrA (74 aa).

The protein belongs to the CsrA/RsmA family. As to quaternary structure, homodimer; the beta-strands of each monomer intercalate to form a hydrophobic core, while the alpha-helices form wings that extend away from the core.

Its subcellular location is the cytoplasm. Its function is as follows. A translational regulator that binds mRNA to regulate translation initiation and/or mRNA stability. Usually binds in the 5'-UTR at or near the Shine-Dalgarno sequence preventing ribosome-binding, thus repressing translation. Its main target seems to be the major flagellin gene, while its function is anatagonized by FliW. The chain is Translational regulator CsrA from Oceanobacillus iheyensis (strain DSM 14371 / CIP 107618 / JCM 11309 / KCTC 3954 / HTE831).